The following is a 128-amino-acid chain: Cytochrome c-type biogenesis protein CcmE (128 aa).

The Cytoplasmic portion of the chain corresponds to 1 to 8 (MQKRVRNR). The chain crosses the membrane as a helical; Signal-anchor for type II membrane protein span at residues 9-29 (LITIIICFCSACLGISIILYN). Topologically, residues 30–128 (LEKNIVFFLP…KHDENYRPPQ (99 aa)) are periplasmic. His-120 and Tyr-124 together coordinate heme.

It belongs to the CcmE/CycJ family.

The protein resides in the cell inner membrane. Its function is as follows. Heme chaperone required for the biogenesis of c-type cytochromes. Transiently binds heme delivered by CcmC and transfers the heme to apo-cytochromes in a process facilitated by CcmF and CcmH. This chain is Cytochrome c-type biogenesis protein CcmE, found in Rickettsia conorii (strain ATCC VR-613 / Malish 7).